Consider the following 264-residue polypeptide: MSSNIFGSVPILVVVAIQLLLVHNVSSQNVTNDYLNHQCNNTQGRYTHGSTFEKNLNQVLHNISNLDLRYGYAYVSNVVAYKVSKDPNIVFVLLQCRGDSFGSKCHSCLSTAVSGLRERCPGNRGATIWYDQCLLEISSVDSEGRIHYKRMFYMQNPTNVTNDPKRFEDKRRDLLHKLMLEATKDSKENGAKGLLYAVGEMRIGRNKMYAMVQCTQDLWQTGCHVCLEWITQMKYGEFFYRKPGGRVCGRSCSFRYELYPFLRR.

The N-terminal stretch at Met1 to Ser27 is a signal peptide. Gnk2-homologous domains lie at Tyr34–Ser142 and Tyr148–Phe261.

It belongs to the cysteine-rich repeat secretory protein family.

Its subcellular location is the secreted. This Arabidopsis thaliana (Mouse-ear cress) protein is Cysteine-rich repeat secretory protein 26 (CRRSP26).